A 127-amino-acid polypeptide reads, in one-letter code: Small ribosomal subunit protein uS12 (127 aa).

Asp-89 is modified (3-methylthioaspartic acid).

The protein belongs to the universal ribosomal protein uS12 family. As to quaternary structure, part of the 30S ribosomal subunit. Contacts proteins S8 and S17. May interact with IF1 in the 30S initiation complex.

With S4 and S5 plays an important role in translational accuracy. Functionally, interacts with and stabilizes bases of the 16S rRNA that are involved in tRNA selection in the A site and with the mRNA backbone. Located at the interface of the 30S and 50S subunits, it traverses the body of the 30S subunit contacting proteins on the other side and probably holding the rRNA structure together. The combined cluster of proteins S8, S12 and S17 appears to hold together the shoulder and platform of the 30S subunit. The chain is Small ribosomal subunit protein uS12 from Akkermansia muciniphila (strain ATCC BAA-835 / DSM 22959 / JCM 33894 / BCRC 81048 / CCUG 64013 / CIP 107961 / Muc).